A 356-amino-acid polypeptide reads, in one-letter code: MTCEQKSRPVQSCQMLPDVVSNEQQSLVLVKKLLAIAISSITYLRGLFSEKAYGRKYVGELKVYILREDSCPGAQQIVHWLQGCFDALQRRYLRMVLLSIYCDPDNPQKVTECYQFKIKYTEKGPQMDFESKNGQSLTKMACDNTQKSSMLLVRKLYMLMQNLGPLPDDVCLNMKLLYYDEVTPQEYQPPGFKEDDNGTLMFEREPVNLTMGEVVTPFHSIKMNVTTEKKRIEPFEDDVEVCVSTKWSLKISEDGMMSETSVQQECMTKENVITDAGIEYSETQETQEQPHRHTKEDFSTNPKMDNLVKKTADLKVDARKTRSGRIFEPQISQLEFPLSQDPQPSVPKRRKVSVPK.

In terms of domain architecture, HORMA spans 24-225; the sequence is QQSLVLVKKL…TPFHSIKMNV (202 aa). Disordered regions lie at residues 282–305 and 333–356; these read ETQE…PKMD and QLEF…SVPK. Positions 288–298 are enriched in basic and acidic residues; the sequence is EQPHRHTKEDF. Residues 347-356 show a composition bias toward basic residues; it reads PKRRKVSVPK.

The protein localises to the nucleus. The protein resides in the chromosome. Functionally, plays a key role in meiotic progression by ensuring that sufficient numbers of processed DNA double-strand breaks (DSBs) are available for successful homology search, promoting synaptonemal-complex formation independently and playing key role in the male mid-pachytene checkpoint and the female meiotic prophase checkpoint. The protein is HORMA domain-containing protein 1 (hormad1) of Danio rerio (Zebrafish).